The following is a 517-amino-acid chain: Cytochrome P450 11B, mitochondrial (517 aa).

Residues 1-45 constitute a mitochondrion transit peptide; sequence MLEKTAARQIGSCLMRCRTLDTTSPLWTGFSRLSTAPLIHEARED. Residue C465 participates in heme binding.

This sequence belongs to the cytochrome P450 family. Heme serves as cofactor.

Its subcellular location is the mitochondrion membrane. The enzyme catalyses a steroid + 2 reduced [adrenodoxin] + O2 + 2 H(+) = an 11beta-hydroxysteroid + 2 oxidized [adrenodoxin] + H2O. Functionally, has 11 beta-hydroxylation, 18-hydroxylation activities and aldosterone synthetic activity. Catalyzes the final steps of glucocorticoid and mineralocorticoid biosynthesis. The chain is Cytochrome P450 11B, mitochondrial (CYP11B) from Aquarana catesbeiana (American bullfrog).